A 307-amino-acid polypeptide reads, in one-letter code: Transcription factor DIVARICATA (307 aa).

The SANT domain occupies Arg21–Asp74. The segment at Gln109–Pro133 is disordered. Over residues Ser124 to Pro133 the composition is skewed to basic and acidic residues. Residues Gln126–Leu182 form the HTH myb-type domain. Residues Trp154–Phe178 constitute a DNA-binding region (H-T-H motif). Composition is skewed to polar residues over residues Ile196–Thr206 and Met222–Ser231. The segment at Ile196–Ser231 is disordered.

Its subcellular location is the nucleus. Functionally, involved in the dorsovental asymmetry of flowers. Promotes ventral identity. This chain is Transcription factor DIVARICATA (DIVARICATA), found in Antirrhinum majus (Garden snapdragon).